We begin with the raw amino-acid sequence, 210 residues long: V-type sodium ATPase subunit D (210 aa).

It belongs to the V-ATPase D subunit family.

Functionally, involved in ATP-driven sodium extrusion. This Enterococcus hirae (strain ATCC 9790 / DSM 20160 / JCM 8729 / LMG 6399 / NBRC 3181 / NCIMB 6459 / NCDO 1258 / NCTC 12367 / WDCM 00089 / R) protein is V-type sodium ATPase subunit D (ntpD).